Here is a 437-residue protein sequence, read N- to C-terminus: 3-phosphoshikimate 1-carboxyvinyltransferase (437 aa).

Residues K22, S23, and R27 each contribute to the 3-phosphoshikimate site. K22 serves as a coordination point for phosphoenolpyruvate. Residues G96 and R125 each coordinate phosphoenolpyruvate. The 3-phosphoshikimate site is built by S170, Q172, D323, and K350. Q172 serves as a coordination point for phosphoenolpyruvate. The active-site Proton acceptor is D323. 2 residues coordinate phosphoenolpyruvate: R354 and R396.

It belongs to the EPSP synthase family. Monomer.

It is found in the cytoplasm. The catalysed reaction is 3-phosphoshikimate + phosphoenolpyruvate = 5-O-(1-carboxyvinyl)-3-phosphoshikimate + phosphate. It functions in the pathway metabolic intermediate biosynthesis; chorismate biosynthesis; chorismate from D-erythrose 4-phosphate and phosphoenolpyruvate: step 6/7. Its function is as follows. Catalyzes the transfer of the enolpyruvyl moiety of phosphoenolpyruvate (PEP) to the 5-hydroxyl of shikimate-3-phosphate (S3P) to produce enolpyruvyl shikimate-3-phosphate and inorganic phosphate. The sequence is that of 3-phosphoshikimate 1-carboxyvinyltransferase from Synechococcus sp. (strain RCC307).